The chain runs to 284 residues: UPF0276 protein Ping_0944 (284 aa).

Belongs to the UPF0276 family.

The protein is UPF0276 protein Ping_0944 of Psychromonas ingrahamii (strain DSM 17664 / CCUG 51855 / 37).